An 85-amino-acid chain; its full sequence is U4-theraphotoxin-Hhn1z (85 aa).

A signal peptide spans 1–22 (MKMTLIAILTCAAVLVLHTTAA). Residues 23 to 48 (EELEAESQLMEVGMPDTELEAVDEER) constitute a propeptide that is removed on maturation. 3 disulfides stabilise this stretch: Cys52–Cys66, Cys56–Cys77, and Cys71–Cys82.

It belongs to the neurotoxin 12 (Hwtx-2) family. 02 (Hwtx-2) subfamily. Expressed by the venom gland.

Its subcellular location is the secreted. Postsynaptic neurotoxin. This is U4-theraphotoxin-Hhn1z from Cyriopagopus hainanus (Chinese bird spider).